Consider the following 307-residue polypeptide: Cytochrome c1, heme protein, mitochondrial (307 aa).

Residues M1–Y56 constitute a mitochondrion transit peptide. Over G57–M269 the chain is Mitochondrial intermembrane. Residues A89–S259 enclose the Cytochrome c domain. 4 residues coordinate heme c: C102, C105, H106, and M225. Residues G270–Y287 form a helical membrane-spanning segment. Topologically, residues K288–K307 are mitochondrial matrix.

It belongs to the cytochrome c family. As to quaternary structure, component of the ubiquinol-cytochrome c oxidoreductase (cytochrome b-c1 complex, complex III, CIII), a multisubunit enzyme composed of 3 respiratory subunits cytochrome b, cytochrome c1 and Rieske protein, 2 core protein subunits, and additional low-molecular weight protein subunits. The complex exists as an obligatory dimer and forms supercomplexes (SCs) in the inner mitochondrial membrane with cytochrome c oxidase (complex IV, CIV). Requires heme c as cofactor.

It is found in the mitochondrion inner membrane. It catalyses the reaction a quinol + 2 Fe(III)-[cytochrome c](out) = a quinone + 2 Fe(II)-[cytochrome c](out) + 2 H(+)(out). Component of the ubiquinol-cytochrome c oxidoreductase, a multisubunit transmembrane complex that is part of the mitochondrial electron transport chain which drives oxidative phosphorylation. The respiratory chain contains 3 multisubunit complexes succinate dehydrogenase (complex II, CII), ubiquinol-cytochrome c oxidoreductase (cytochrome b-c1 complex, complex III, CIII) and cytochrome c oxidase (complex IV, CIV), that cooperate to transfer electrons derived from NADH and succinate to molecular oxygen, creating an electrochemical gradient over the inner membrane that drives transmembrane transport and the ATP synthase. The cytochrome b-c1 complex catalyzes electron transfer from ubiquinol to cytochrome c, linking this redox reaction to translocation of protons across the mitochondrial inner membrane, with protons being carried across the membrane as hydrogens on the quinol. In the process called Q cycle, 2 protons are consumed from the matrix, 4 protons are released into the intermembrane space and 2 electrons are passed to cytochrome c. Cytochrome c1 is a catalytic core subunit containing a c-type heme. It transfers electrons from the [2Fe-2S] iron-sulfur cluster of the Rieske protein to cytochrome c. This chain is Cytochrome c1, heme protein, mitochondrial (cyt1), found in Schizosaccharomyces pombe (strain 972 / ATCC 24843) (Fission yeast).